Consider the following 307-residue polypeptide: tRNA-cytidine(32) 2-sulfurtransferase (307 aa).

Positions 44–49 (SGGKDS) match the PP-loop motif motif. Residues C119, C122, and C210 each contribute to the [4Fe-4S] cluster site.

This sequence belongs to the TtcA family. As to quaternary structure, homodimer. Requires Mg(2+) as cofactor. [4Fe-4S] cluster serves as cofactor.

It is found in the cytoplasm. It catalyses the reaction cytidine(32) in tRNA + S-sulfanyl-L-cysteinyl-[cysteine desulfurase] + AH2 + ATP = 2-thiocytidine(32) in tRNA + L-cysteinyl-[cysteine desulfurase] + A + AMP + diphosphate + H(+). It functions in the pathway tRNA modification. In terms of biological role, catalyzes the ATP-dependent 2-thiolation of cytidine in position 32 of tRNA, to form 2-thiocytidine (s(2)C32). The sulfur atoms are provided by the cysteine/cysteine desulfurase (IscS) system. The sequence is that of tRNA-cytidine(32) 2-sulfurtransferase from Aliivibrio salmonicida (strain LFI1238) (Vibrio salmonicida (strain LFI1238)).